The following is a 321-amino-acid chain: Outer envelope protein 36, chloroplastic (321 aa).

It belongs to the OEP80 (TC 1.B.33.2) family. In terms of tissue distribution, expressed in germinating seeds.

The protein resides in the plastid. It is found in the chloroplast outer membrane. Functionally, may play a role during plastid development. The sequence is that of Outer envelope protein 36, chloroplastic from Arabidopsis thaliana (Mouse-ear cress).